A 266-amino-acid polypeptide reads, in one-letter code: Interleukin-33 (266 aa).

The segment at 1 to 67 (MRPRMKYSNS…ETSYFRKEPT (67 aa)) is homeodomain-like HTH domain. A propeptide spanning residues 1-101 (MRPRMKYSNS…RSLLGSIQAF (101 aa)) is cleaved from the precursor. Positions 66–108 (PTKRYSLKSGTKHEENFSAYPRDSRKRSLLGSIQAFAASVDTL) are interaction with RELA.

This sequence belongs to the IL-1 family. Highly divergent. As to quaternary structure, (Microbial infection) Interacts (in reduced form) with H.polygyrus ARI; the interaction abolishes the interaction with its primary receptor IL1RL1. Forms a 1:1:1 heterotrimeric complex with its primary high-affinity receptor IL1RL1 and the coreceptor IL1RAP. Interacts with cargo receptor TMED10; the interaction mediates the translocation from the cytoplasm into the ERGIC (endoplasmic reticulum-Golgi intermediate compartment) and thereby secretion. In terms of processing, the full-length protein can be released from cells and is able to signal via the IL1RL1/ST2 receptor. However, proteolytic processing by CELA1, CSTG/cathepsin G and ELANE/neutrophil elastase produces C-terminal peptides that are more active than the unprocessed full-length protein. May also be proteolytically processed by calpains. Proteolytic cleavage mediated by apoptotic caspases including CASP3 and CASP7 results in IL33 inactivation. In vitro proteolytic cleavage by CASP1 was reported but could not be confirmed in vivo suggesting that IL33 is probably not a direct substrate for that caspase.

The protein localises to the nucleus. The protein resides in the chromosome. Its subcellular location is the cytoplasm. It localises to the cytoplasmic vesicle. It is found in the secretory vesicle. The protein localises to the secreted. In terms of biological role, cytokine that binds to and signals through the IL1RL1/ST2 receptor which in turn activates NF-kappa-B and MAPK signaling pathways in target cells. Involved in the maturation of Th2 cells inducing the secretion of T-helper type 2-associated cytokines. Also involved in activation of mast cells, basophils, eosinophils and natural killer cells. Acts as an enhancer of polarization of alternatively activated macrophages. Acts as a chemoattractant for Th2 cells, and may function as an 'alarmin', that amplifies immune responses during tissue injury. Induces rapid UCP2-dependent mitochondrial rewiring that attenuates the generation of reactive oxygen species and preserves the integrity of Krebs cycle required for persistent production of itaconate and subsequent GATA3-dependent differentiation of inflammation-resolving alternatively activated macrophages. Functionally, in quiescent endothelia the uncleaved form is constitutively and abundantly expressed, and acts as a chromatin-associated nuclear factor with transcriptional repressor properties, it may sequester nuclear NF-kappaB/RELA, lowering expression of its targets. This form is rapidely lost upon angiogenic or pro-inflammatory activation. This is Interleukin-33 from Mus musculus (Mouse).